Reading from the N-terminus, the 256-residue chain is Thiazole synthase (256 aa).

Lys95 serves as the catalytic Schiff-base intermediate with DXP. 1-deoxy-D-xylulose 5-phosphate-binding positions include Gly156, 182–183, and 204–205; these read AG and NT.

This sequence belongs to the ThiG family. Homotetramer. Forms heterodimers with either ThiH or ThiS.

It is found in the cytoplasm. The enzyme catalyses [ThiS sulfur-carrier protein]-C-terminal-Gly-aminoethanethioate + 2-iminoacetate + 1-deoxy-D-xylulose 5-phosphate = [ThiS sulfur-carrier protein]-C-terminal Gly-Gly + 2-[(2R,5Z)-2-carboxy-4-methylthiazol-5(2H)-ylidene]ethyl phosphate + 2 H2O + H(+). It participates in cofactor biosynthesis; thiamine diphosphate biosynthesis. Functionally, catalyzes the rearrangement of 1-deoxy-D-xylulose 5-phosphate (DXP) to produce the thiazole phosphate moiety of thiamine. Sulfur is provided by the thiocarboxylate moiety of the carrier protein ThiS. In vitro, sulfur can be provided by H(2)S. This chain is Thiazole synthase, found in Escherichia coli O127:H6 (strain E2348/69 / EPEC).